Here is a 158-residue protein sequence, read N- to C-terminus: MSLFEGKKVIIIGDRDGIPGPAIEKCIEGTGAEVVFSSTECFVUTAAGAMDLENQKRVKTLTEKHGAENILVILGAAEGEAAGLAAETVTNGDPTFAGPLSNVQLGLRVYHAVEPEFKEEVNEEVYEEEIGMMEMVLEVDEIIEEMTDIRTEFCKFLD.

U44 is an active-site residue. Residue U44 is a non-standard amino acid, selenocysteine.

It belongs to the GrdA family. In terms of assembly, monomer. Component of the glycine, sarcosine and betaine reductase complexes, together with components B and C.

The enzyme catalyses acetyl phosphate + [thioredoxin]-disulfide + NH4(+) + H2O = [thioredoxin]-dithiol + glycine + phosphate + H(+). It carries out the reaction acetyl phosphate + methylamine + [thioredoxin]-disulfide + H2O = sarcosine + [thioredoxin]-dithiol + phosphate + H(+). The catalysed reaction is acetyl phosphate + trimethylamine + [thioredoxin]-disulfide + H2O = glycine betaine + [thioredoxin]-dithiol + phosphate + H(+). Functionally, in the first step of glycine, betaine and sarcosine reductases, the substrate is bound to component PB via a Schiff base intermediate. Then the PB-activated substrate is nucleophilically attacked by the selenol anion of component PA to transform it to a carboxymethylated selenoether and the respective amine. By action of component PC, acetyl phosphate is formed, leaving component PA in its oxidized state. Finally component PA becomes reduced by the thioredoxin system to start a new catalytic cycle of reductive deamination. The sequence is that of Glycine/sarcosine/betaine reductase complex component A from Clostridium botulinum (strain ATCC 19397 / Type A).